Consider the following 125-residue polypeptide: Holo-[acyl-carrier-protein] synthase (125 aa).

Mg(2+) contacts are provided by Asp-8 and Glu-57.

Belongs to the P-Pant transferase superfamily. AcpS family. It depends on Mg(2+) as a cofactor.

Its subcellular location is the cytoplasm. The enzyme catalyses apo-[ACP] + CoA = holo-[ACP] + adenosine 3',5'-bisphosphate + H(+). Its function is as follows. Transfers the 4'-phosphopantetheine moiety from coenzyme A to a Ser of acyl-carrier-protein. In Nitrosospira multiformis (strain ATCC 25196 / NCIMB 11849 / C 71), this protein is Holo-[acyl-carrier-protein] synthase.